A 1690-amino-acid chain; its full sequence is Restin homolog (1690 aa).

Polar residues-rich tracts occupy residues 1–11 (MSDDTSASGGT) and 39–51 (NIPT…TGIP). The disordered stretch occupies residues 1 to 105 (MSDDTSASGG…ESDDNLSSIN (105 aa)). Ser-64 and Ser-67 each carry phosphoserine. Residues 143–185 (GDTHFAAGEWAGVVLDEPNGKNDGCVSGKRYFQCEPKRGIFSR) form the CAP-Gly 1 domain. Residues 195 to 227 (AGAQTPTSPLAKSSPDRSRTVSPTASIRSSMLR) form a disordered region. Residues 214-226 (TVSPTASIRSSML) are compositionally biased toward polar residues. Ser-216 is subject to Phosphoserine. A CAP-Gly 2 domain is found at 260–302 (GETQFAPGNWCGVELDEPSGKNDGTVDDIRYFECKPKYGVFVP). Phosphoserine is present on residues Ser-309, Ser-322, and Ser-325. Thr-327 is subject to Phosphothreonine. A Phosphoserine modification is found at Ser-328. A Phosphothreonine modification is found at Thr-362. Coiled coils occupy residues 378–468 (QHVE…VSAT), 484–660 (GALQ…DMLR), 667–916 (EEKS…TKLK), 926–981 (LSSC…ELQA), 1001–1121 (ATGH…EAIQ), 1158–1549 (EADM…AQMN), and 1565–1600 (DIET…LETL). Residues 843–905 (QQAAASGEEG…GSLEEEAKKS (63 aa)) form a disordered region. Positions 865-885 (QLKSQAEETQSELKSTQSNLE) are enriched in polar residues. Disordered stretches follow at residues 1031–1052 (QLQD…KEKS) and 1400–1419 (KLDE…NEIQ). Basic and acidic residues-rich tracts occupy residues 1040–1052 (TKLK…KEKS) and 1410–1419 (SQKKSHNEIQ). The disordered stretch occupies residues 1635-1665 (TEDCPIQGSEDQDYSTPSSESNNNEKERKLP). Thr-1681 carries the post-translational modification Phosphothreonine. At Ser-1682 the chain carries Phosphoserine.

Interacts with Lva. As to expression, specifically expressed at the tip of the furrow in cellularizing blastoderms. CLIP-190 and jar are coexpressed at several times in development and in a number of tissues, including embryonic axonal neuron processes and posterior pole.

The protein localises to the cytoplasm. The protein resides in the cytoskeleton. It is found in the golgi apparatus. Its subcellular location is the microtubule organizing center. It localises to the perinuclear region. Its function is as follows. Together CLIP-190 and jar may coordinate the interaction between the actin and microtubule cytoskeleton. May link endocytic vesicles to microtubules. May play a role in formation of furrows during cellularization. The protein is Restin homolog (CLIP-190) of Drosophila melanogaster (Fruit fly).